Here is a 287-residue protein sequence, read N- to C-terminus: Probable endonuclease 4 (287 aa).

Zn(2+) contacts are provided by H69, H109, E144, D178, H181, H215, D228, H230, and E260.

This sequence belongs to the AP endonuclease 2 family. Zn(2+) is required as a cofactor.

The catalysed reaction is Endonucleolytic cleavage to 5'-phosphooligonucleotide end-products.. Functionally, endonuclease IV plays a role in DNA repair. It cleaves phosphodiester bonds at apurinic or apyrimidinic (AP) sites, generating a 3'-hydroxyl group and a 5'-terminal sugar phosphate. The sequence is that of Probable endonuclease 4 from Thermotoga sp. (strain RQ2).